Here is a 948-residue protein sequence, read N- to C-terminus: Valine--tRNA ligase (948 aa).

The 'HIGH' region signature appears at 40–50 (PNVTGSLHMGH). Positions 551–555 (KMSKS) match the 'KMSKS' region motif. Residue K554 participates in ATP binding. Positions 879-945 (LIDKGAELAR…GKLAEQHARI (67 aa)) form a coiled coil.

Belongs to the class-I aminoacyl-tRNA synthetase family. ValS type 1 subfamily. In terms of assembly, monomer.

The protein localises to the cytoplasm. It catalyses the reaction tRNA(Val) + L-valine + ATP = L-valyl-tRNA(Val) + AMP + diphosphate. Catalyzes the attachment of valine to tRNA(Val). As ValRS can inadvertently accommodate and process structurally similar amino acids such as threonine, to avoid such errors, it has a 'posttransfer' editing activity that hydrolyzes mischarged Thr-tRNA(Val) in a tRNA-dependent manner. This Pseudomonas syringae pv. tomato (strain ATCC BAA-871 / DC3000) protein is Valine--tRNA ligase.